Consider the following 722-residue polypeptide: PAB1-binding protein 1 (722 aa).

Basic and acidic residues predominate over residues 1–10 (MKGNFRKRDS). The disordered stretch occupies residues 1–38 (MKGNFRKRDSSTNSRKGGNSDSNYTNGGVPNQNNSSMF). The span at 11–38 (STNSRKGGNSDSNYTNGGVPNQNNSSMF) shows a compositional bias: polar residues. Residues 51–107 (RQDYLLANSIGSDVTVTVTSGVKYTGLLVSCNLESTNGIDVVLRFPRVADSGVSDSV) enclose the Sm domain. Ser-106 carries the phosphoserine modification. Thr-193 carries the phosphothreonine modification. The residue at position 215 (Ser-215) is a Phosphoserine. Disordered regions lie at residues 305 to 380 (ALKS…LSSK), 412 to 488 (SSTL…NPHT), and 683 to 722 (GSGP…SGHK). Low complexity-rich tracts occupy residues 307-316 (KSNSKPNSNK), 338-347 (SSSNSNKNEN), 356-370 (PAAA…PQKT), and 412-421 (SSTLKSNSSL). A Glycyl lysine isopeptide (Lys-Gly) (interchain with G-Cter in ubiquitin) cross-link involves residue Lys-344. A compositionally biased stretch (polar residues) spans 429–455 (TPSAKTVSPTTQISAGKSESRRSGSNI). The residue at position 436 (Ser-436) is a Phosphoserine. Residues 456 to 471 (SQGQSSTGHTTRSSTS) show a composition bias toward low complexity. The segment covering 698 to 722 (SHGHSRNYHQTSHHGHHNSSTSGHK) has biased composition (basic residues).

It belongs to the ataxin-2 family. In terms of assembly, interacts (via C-terminus) with MKT1 (via C-terminus). Interacts with FIR1, IGO1, LSM12, PBP4 and PAB1.

The protein resides in the cytoplasm. It is found in the nucleus. It localises to the mitochondrion. Involved in pre-mRNA polyadenylation. May act to repress the ability of PAB1 to negatively regulate polyadenylation. Negative regulator of poly(A) nuclease (PAN) activity. Promotes mating-type switching in mother cells by positively regulating HO mRNA translation. Localizes MKT1 to polysomes. In Saccharomyces cerevisiae (strain ATCC 204508 / S288c) (Baker's yeast), this protein is PAB1-binding protein 1 (PBP1).